Reading from the N-terminus, the 438-residue chain is ATP synthase subunit alpha, chloroplastic (438 aa).

ATP is bound at residue 170–177 (GDRQTGKT).

Belongs to the ATPase alpha/beta chains family. As to quaternary structure, F-type ATPases have 2 components, CF(1) - the catalytic core - and CF(0) - the membrane proton channel. CF(1) has five subunits: alpha(3), beta(3), gamma(1), delta(1), epsilon(1). CF(0) has four main subunits: a, b, b' and c.

The protein localises to the plastid. It localises to the chloroplast thylakoid membrane. It catalyses the reaction ATP + H2O + 4 H(+)(in) = ADP + phosphate + 5 H(+)(out). In terms of biological role, produces ATP from ADP in the presence of a proton gradient across the membrane. The alpha chain is a regulatory subunit. The chain is ATP synthase subunit alpha, chloroplastic from Ochrosphaera neapolitana.